A 130-amino-acid polypeptide reads, in one-letter code: Small ribosomal subunit protein uS8 (130 aa).

It belongs to the universal ribosomal protein uS8 family. As to quaternary structure, part of the 30S ribosomal subunit. Contacts proteins S5 and S12.

Functionally, one of the primary rRNA binding proteins, it binds directly to 16S rRNA central domain where it helps coordinate assembly of the platform of the 30S subunit. The protein is Small ribosomal subunit protein uS8 of Proteus mirabilis (strain HI4320).